Consider the following 212-residue polypeptide: Peptide methionine sulfoxide reductase MsrA (212 aa).

Cys-52 is an active-site residue.

The protein belongs to the MsrA Met sulfoxide reductase family.

It catalyses the reaction L-methionyl-[protein] + [thioredoxin]-disulfide + H2O = L-methionyl-(S)-S-oxide-[protein] + [thioredoxin]-dithiol. The catalysed reaction is [thioredoxin]-disulfide + L-methionine + H2O = L-methionine (S)-S-oxide + [thioredoxin]-dithiol. Has an important function as a repair enzyme for proteins that have been inactivated by oxidation. Catalyzes the reversible oxidation-reduction of methionine sulfoxide in proteins to methionine. The chain is Peptide methionine sulfoxide reductase MsrA from Escherichia coli (strain SMS-3-5 / SECEC).